A 394-amino-acid polypeptide reads, in one-letter code: MPAFDYNRVFLIVMDSVGIGEAPDAEKFNDKGADTLGHIAEHMGGISLPNMAKLGLSNIREIKGVEKAEKPLAYYGKMKEASNGKDTMTGHWEIMGLYIDKPFRVFPEGFPDELIHELEQKSGRKVIGNKPASGTAILDELGAEHMETGALIVYTSADSVLQIAAHEEVVPLEELYKICEIARELTLDEKYMVGRVIARPFVGKPGEFKRTPNRHDYALKPFDRTVMNELKDDSFDVIAIGKISDIYDGEGITESLRTKSNMDGMDKLVQTLDKGFTGISFVNLVDFDALFGHRRDPEGYGKALEEFDARLPEVFEKMREDDLLIITADHGNDPVHHGTDHTREYVPLLVYSKKHEKPGALPLADTFADIGATIADNFKTNMPKYGKSFLSLLK.

Mn(2+) is bound by residues aspartate 15, aspartate 288, histidine 293, aspartate 329, histidine 330, and histidine 341.

The protein belongs to the phosphopentomutase family. Requires Mn(2+) as cofactor.

The protein resides in the cytoplasm. It catalyses the reaction 2-deoxy-alpha-D-ribose 1-phosphate = 2-deoxy-D-ribose 5-phosphate. It carries out the reaction alpha-D-ribose 1-phosphate = D-ribose 5-phosphate. It functions in the pathway carbohydrate degradation; 2-deoxy-D-ribose 1-phosphate degradation; D-glyceraldehyde 3-phosphate and acetaldehyde from 2-deoxy-alpha-D-ribose 1-phosphate: step 1/2. Isomerase that catalyzes the conversion of deoxy-ribose 1-phosphate (dRib-1-P) and ribose 1-phosphate (Rib-1-P) to deoxy-ribose 5-phosphate (dRib-5-P) and ribose 5-phosphate (Rib-5-P), respectively. The chain is Phosphopentomutase from Bacillus licheniformis (strain ATCC 14580 / DSM 13 / JCM 2505 / CCUG 7422 / NBRC 12200 / NCIMB 9375 / NCTC 10341 / NRRL NRS-1264 / Gibson 46).